Reading from the N-terminus, the 455-residue chain is Kynurenine 3-monooxygenase (455 aa).

2 helical membrane-spanning segments follow: residues 393–416 and 429–453; these read WLFR…SMPY and LLWR…YWQR.

It belongs to the aromatic-ring hydroxylase family. KMO subfamily. Requires FAD as cofactor.

The protein localises to the mitochondrion. Its subcellular location is the membrane. The catalysed reaction is L-kynurenine + NADPH + O2 + H(+) = 3-hydroxy-L-kynurenine + NADP(+) + H2O. It participates in cofactor biosynthesis; NAD(+) biosynthesis; quinolinate from L-kynurenine: step 1/3. Functionally, catalyzes the hydroxylation of L-kynurenine (L-Kyn) to form 3-hydroxy-L-kynurenine (L-3OHKyn). Required for synthesis of quinolinic acid. The protein is Kynurenine 3-monooxygenase of Drosophila willistoni (Fruit fly).